The following is a 189-amino-acid chain: UPF0398 protein lhv_1265 (189 aa).

This sequence belongs to the UPF0398 family.

This Lactobacillus helveticus (strain DPC 4571) protein is UPF0398 protein lhv_1265.